The primary structure comprises 891 residues: Schlafen family member 5 (891 aa).

A Glycyl lysine isopeptide (Lys-Gly) (interchain with G-Cter in SUMO2) cross-link involves residue Lys-59. 578 to 585 (GLPGSGKT) contributes to the ATP binding site.

It belongs to the Schlafen family. Subgroup III subfamily.

May have a role in hematopoietic cell differentiation. This chain is Schlafen family member 5 (SLFN5), found in Homo sapiens (Human).